Consider the following 215-residue polypeptide: Octanoyltransferase (215 aa).

One can recognise a BPL/LPL catalytic domain in the interval 31–206; sequence TTAPDEIWLV…QLVKHLDYAE (176 aa). Residues 70–77, 137–139, and 150–152 each bind substrate; these read RGGQVTYH, SLG, and GLA. The active-site Acyl-thioester intermediate is the Cys168.

Belongs to the LipB family.

The protein resides in the cytoplasm. The enzyme catalyses octanoyl-[ACP] + L-lysyl-[protein] = N(6)-octanoyl-L-lysyl-[protein] + holo-[ACP] + H(+). The protein operates within protein modification; protein lipoylation via endogenous pathway; protein N(6)-(lipoyl)lysine from octanoyl-[acyl-carrier-protein]: step 1/2. Functionally, catalyzes the transfer of endogenously produced octanoic acid from octanoyl-acyl-carrier-protein onto the lipoyl domains of lipoate-dependent enzymes. Lipoyl-ACP can also act as a substrate although octanoyl-ACP is likely to be the physiological substrate. This is Octanoyltransferase from Pseudomonas fluorescens (strain Pf0-1).